A 305-amino-acid polypeptide reads, in one-letter code: Succinate--CoA ligase [ADP-forming] subunit alpha (305 aa).

Residues 17-20 (TGKE), K43, and 96-98 (ITE) each bind CoA. Residue Y161 coordinates substrate. H249 serves as the catalytic Tele-phosphohistidine intermediate.

Belongs to the succinate/malate CoA ligase alpha subunit family. In terms of assembly, heterotetramer of two alpha and two beta subunits.

The enzyme catalyses succinate + ATP + CoA = succinyl-CoA + ADP + phosphate. The catalysed reaction is GTP + succinate + CoA = succinyl-CoA + GDP + phosphate. It participates in carbohydrate metabolism; tricarboxylic acid cycle; succinate from succinyl-CoA (ligase route): step 1/1. Functionally, succinyl-CoA synthetase functions in the citric acid cycle (TCA), coupling the hydrolysis of succinyl-CoA to the synthesis of either ATP or GTP and thus represents the only step of substrate-level phosphorylation in the TCA. The alpha subunit of the enzyme binds the substrates coenzyme A and phosphate, while succinate binding and nucleotide specificity is provided by the beta subunit. The protein is Succinate--CoA ligase [ADP-forming] subunit alpha of Aquifex aeolicus (strain VF5).